Here is a 463-residue protein sequence, read N- to C-terminus: EPD1-interacting receptor-like cytoplasmic serine/threonine-protein kinase (463 aa).

Residues Phe91–Val383 form the Protein kinase domain. ATP contacts are provided by residues Leu97–Val105 and Lys126. 2 positions are modified to phosphotyrosine: Tyr171 and Tyr173. The Proton acceptor role is filled by Asp221.

It belongs to the protein kinase superfamily. Ser/Thr protein kinase family. As to quaternary structure, interacts with the V.dahliae elicitor EPD1 (AC G2WWH6). Post-translationally, phosphorylated at Tyr-171 and Tyr-173 in the presence of pathogen-associated molecular patterns (PAMPs); this triggers the expression of pathogenesis-related genes.

It localises to the cell membrane. The enzyme catalyses L-seryl-[protein] + ATP = O-phospho-L-seryl-[protein] + ADP + H(+). It carries out the reaction L-threonyl-[protein] + ATP = O-phospho-L-threonyl-[protein] + ADP + H(+). Its function is as follows. Required for pathogen-associated molecular pattern (PAMP, e.g. chitin and flg22)-triggered immunity (PTI) involving reactive oxygen species (ROS) accumulation and triggering plant defense, including defense-related gene expression (e.g. PR1 and LOX). Ensures specific recognition of the EPD1 effector of Verticillium dahliae, resulting in a hypersensitive response known as effector-triggered immunity (ETI), characterized by the activation of programmed cell death to limit infection by the pathogen. Priming plants with the incompatible pathogen V.dahliae leads to an increased resistance to both the broad-host-range filamentous pathogen Botrytis cinerea and the semibiotrophic pathogen Phytophthora capsici, as a result of systemic acquired resistance (SAR). This Nicotiana benthamiana protein is EPD1-interacting receptor-like cytoplasmic serine/threonine-protein kinase.